A 254-amino-acid chain; its full sequence is Alcohol dehydrogenase 1 (254 aa).

10 to 33 (FVAGLGGIGFDTSREIVKSGPKNL) provides a ligand contact to NAD(+). Ser-138 contributes to the substrate binding site. Tyr-151 (proton acceptor) is an active-site residue.

Belongs to the short-chain dehydrogenases/reductases (SDR) family. As to quaternary structure, homodimer.

The enzyme catalyses a primary alcohol + NAD(+) = an aldehyde + NADH + H(+). It carries out the reaction a secondary alcohol + NAD(+) = a ketone + NADH + H(+). The protein is Alcohol dehydrogenase 1 (Adh1) of Drosophila mulleri (Fruit fly).